The sequence spans 84 residues: Small ribosomal subunit protein uS17 (84 aa).

Belongs to the universal ribosomal protein uS17 family. In terms of assembly, part of the 30S ribosomal subunit.

Its function is as follows. One of the primary rRNA binding proteins, it binds specifically to the 5'-end of 16S ribosomal RNA. This is Small ribosomal subunit protein uS17 from Erwinia tasmaniensis (strain DSM 17950 / CFBP 7177 / CIP 109463 / NCPPB 4357 / Et1/99).